The following is a 344-amino-acid chain: Dihydroorotate dehydrogenase (quinone) (344 aa).

Residues 65 to 69 and Thr-89 contribute to the FMN site; that span reads AGLDK. Position 69 (Lys-69) interacts with substrate. 114–118 contributes to the substrate binding site; it reads NRMGF. Positions 145 and 178 each coordinate FMN. Asn-178 contributes to the substrate binding site. Ser-181 serves as the catalytic Nucleophile. Asn-183 is a substrate binding site. FMN is bound by residues Lys-223 and Thr-251. Substrate is bound at residue 252–253; it reads NT. Residues Gly-274, Gly-303, and 324–325 contribute to the FMN site; that span reads YS.

It belongs to the dihydroorotate dehydrogenase family. Type 2 subfamily. As to quaternary structure, monomer. FMN is required as a cofactor.

It is found in the cell membrane. The enzyme catalyses (S)-dihydroorotate + a quinone = orotate + a quinol. Its pathway is pyrimidine metabolism; UMP biosynthesis via de novo pathway; orotate from (S)-dihydroorotate (quinone route): step 1/1. Its function is as follows. Catalyzes the conversion of dihydroorotate to orotate with quinone as electron acceptor. The chain is Dihydroorotate dehydrogenase (quinone) from Cupriavidus taiwanensis (strain DSM 17343 / BCRC 17206 / CCUG 44338 / CIP 107171 / LMG 19424 / R1) (Ralstonia taiwanensis (strain LMG 19424)).